Reading from the N-terminus, the 348-residue chain is GPALPP motifs-containing protein 1 (348 aa).

2 disordered regions span residues 1–163 (MARD…AKGP) and 177–317 (QRMK…DLKV). Residue alanine 2 is modified to N-acetylalanine. The GPALPP motif 1 signature appears at 7 to 12 (GPALPP). Residues 14-27 (FKERATVEDQERDP) are compositionally biased toward basic and acidic residues. Serine 28 carries the post-translational modification Phosphoserine. Positions 32–37 (GPALPP) match the GPALPP motif 2 motif. Low complexity predominate over residues 41–59 (SSSSDSSDSNEDSSSLSEE). Residues 60-69 (GNQESEEDDA) are compositionally biased toward acidic residues. The GPALPP motif 3 signature appears at 93-98 (GPALPP). Serine 106 is subject to Phosphoserine. The segment covering 108 to 117 (PRPIIGPALP) has biased composition (pro residues). Positions 113–118 (GPALPP) match the GPALPP motif 4 motif. Phosphoserine is present on residues serine 138, serine 143, and serine 148. Over residues 144–154 (EEAESGEDEDI) the composition is skewed to acidic residues. Basic and acidic residues-rich tracts occupy residues 177–195 (QRMKEKLTKGDDDSPKPVT), 235–269 (PADRERKAKEIQEARKSLSKKDEENMLSGRDKRLA), 277–287 (ESKRSESLMDI), and 295–317 (KAAEDKNRHQERTPFDRDKDLKV). Glycyl lysine isopeptide (Lys-Gly) (interchain with G-Cter in SUMO2) cross-links involve residues lysine 279 and lysine 316.

This is GPALPP motifs-containing protein 1 (Gpalpp1) from Rattus norvegicus (Rat).